A 153-amino-acid chain; its full sequence is MAYYNTLALLTIFIFSGAFHRAQGTHGEADSKCPLMVKVLDAVRGIPAAKLPVKVFKQNEDKSWDLISSGTTSSDGEIHNLATEEQFVEGIYKLEFATKRFWSKLGLTPFHEYVDVVFTANDAGHRHYTTAVLLTPYSFSTTAVVSDVKEAHV.

The N-terminal stretch at 1–24 (MAYYNTLALLTIFIFSGAFHRAQG) is a signal peptide. C33 is subject to Sulfocysteine. Residues K38, E77, and S140 each contribute to the L-thyroxine site.

The protein belongs to the transthyretin family. As to quaternary structure, homotetramer. Dimer of dimers. In the homotetramer, subunits assemble around a central channel that can accommodate two ligand molecules. Interacts with RBP4. Sulfonation of the reactive cysteine Cys-33 enhances the stability of the native conformation of TTR, avoiding misassembly of the protein leading to amyloid formation. In terms of tissue distribution, detected in plasma (at protein level). Expressed during metamorphosis in tadpole liver but not in tadpole brain, nor adult liver.

The protein resides in the secreted. Thyroid hormone-binding protein, with a much higher binding affinity for triiodothyronine (T3) than for thyroxine (T4). Probably transports triiodothyronine from the bloodstream to the brain. The sequence is that of Transthyretin from Aquarana catesbeiana (American bullfrog).